We begin with the raw amino-acid sequence, 462 residues long: Argininosuccinate lyase (462 aa).

The protein belongs to the lyase 1 family. Argininosuccinate lyase subfamily.

The protein localises to the cytoplasm. It carries out the reaction 2-(N(omega)-L-arginino)succinate = fumarate + L-arginine. It participates in amino-acid biosynthesis; L-arginine biosynthesis; L-arginine from L-ornithine and carbamoyl phosphate: step 3/3. The sequence is that of Argininosuccinate lyase from Bacillus cereus (strain ZK / E33L).